A 199-amino-acid chain; its full sequence is Large ribosomal subunit protein bL25 (199 aa).

The protein belongs to the bacterial ribosomal protein bL25 family. CTC subfamily. Part of the 50S ribosomal subunit; part of the 5S rRNA/L5/L18/L25 subcomplex. Contacts the 5S rRNA. Binds to the 5S rRNA independently of L5 and L18.

Its function is as follows. This is one of the proteins that binds to the 5S RNA in the ribosome where it forms part of the central protuberance. This is Large ribosomal subunit protein bL25 from Pseudomonas fluorescens (strain ATCC BAA-477 / NRRL B-23932 / Pf-5).